Here is a 481-residue protein sequence, read N- to C-terminus: Probable squalene synthase (481 aa).

2 helical membrane-spanning segments follow: residues 294 to 314 (SVFN…ELVF) and 416 to 436 (FLVL…IGAA).

It belongs to the phytoene/squalene synthase family. It depends on Mg(2+) as a cofactor.

Its subcellular location is the endoplasmic reticulum membrane. The enzyme catalyses 2 (2E,6E)-farnesyl diphosphate + NADPH + H(+) = squalene + 2 diphosphate + NADP(+). It carries out the reaction 2 (2E,6E)-farnesyl diphosphate + NADH + H(+) = squalene + 2 diphosphate + NAD(+). Its pathway is terpene metabolism; lanosterol biosynthesis; lanosterol from farnesyl diphosphate: step 1/3. In terms of biological role, catalyzes the condensation of 2 two farnesyl pyrophosphate moieties to form squalene. It is the first committed enzyme of the sterol biosynthesis pathway. Required for the biosynthesis of ergosterol. The protein is Probable squalene synthase (erg-6) of Neurospora crassa (strain ATCC 24698 / 74-OR23-1A / CBS 708.71 / DSM 1257 / FGSC 987).